A 392-amino-acid polypeptide reads, in one-letter code: 2'-deamino-2'-hydroxyneamine transaminase (392 aa).

The residue at position 249 (lysine 249) is an N6-(pyridoxal phosphate)lysine.

It belongs to the class-III pyridoxal-phosphate-dependent aminotransferase family. Pyridoxal 5'-phosphate is required as a cofactor.

The catalysed reaction is neamine + 2-oxoglutarate = 6'-oxoparomamine + L-glutamate. The enzyme catalyses 2'-deamino-2'-hydroxyneamine + 2-oxoglutarate = 2'-deamino-2'-hydroxy-6'-dehydroparomamine + L-glutamate. Its pathway is antibiotic biosynthesis; kanamycin biosynthesis. Aminotransferase that has 6'-oxoglucosaminyl:L-glutamate aminotransferase activity by catalyzing pyridoxal-5'-phosphate-mediated transamination leading to the conversion of paromamine to neamine in the biosynthetic pathway of kanamycin B. This Streptomyces kanamyceticus protein is 2'-deamino-2'-hydroxyneamine transaminase (kacL).